The sequence spans 510 residues: NAD(P)H-quinone oxidoreductase subunit 2, chloroplastic (510 aa).

Transmembrane regions (helical) follow at residues 24-44 (LLLFHGSFIFPECILIFGLIL), 59-79 (WFYFISSTSLVMSITALLFRW), 99-119 (IFQFLILLCSTLCIPLSVEYI), 124-144 (MAITEFLLFVLTATLGGMFLC), 149-169 (LITIFVAPECFSLCSYLLSGY), 183-203 (YLLMGGASSSILVHGFSWLYG), 229-249 (ISIALISITVGIGFKLSPAPF), 295-315 (WHLLLEILAILSMILGNLIAI), 323-343 (MLAYSSIGQIGYVIIGIIVGD), 347-367 (GYASMITYMLFYISMNLGTFA), 395-415 (ALSSALCLLSLGGLPPLAGFF), and 418-438 (LHLFWCGWQAGLYFLVSIGLL).

Belongs to the complex I subunit 2 family. NDH is composed of at least 16 different subunits, 5 of which are encoded in the nucleus.

The protein resides in the plastid. Its subcellular location is the chloroplast thylakoid membrane. It carries out the reaction a plastoquinone + NADH + (n+1) H(+)(in) = a plastoquinol + NAD(+) + n H(+)(out). It catalyses the reaction a plastoquinone + NADPH + (n+1) H(+)(in) = a plastoquinol + NADP(+) + n H(+)(out). Its function is as follows. NDH shuttles electrons from NAD(P)H:plastoquinone, via FMN and iron-sulfur (Fe-S) centers, to quinones in the photosynthetic chain and possibly in a chloroplast respiratory chain. The immediate electron acceptor for the enzyme in this species is believed to be plastoquinone. Couples the redox reaction to proton translocation, and thus conserves the redox energy in a proton gradient. This chain is NAD(P)H-quinone oxidoreductase subunit 2, chloroplastic, found in Yucca glauca (Soapweed yucca).